We begin with the raw amino-acid sequence, 565 residues long: Urease subunit beta (565 aa).

The Urease domain occupies 130–565; the sequence is GGIDTHIHFI…LALARKYFMI (436 aa). Ni(2+) contacts are provided by His135, His137, and Lys218. An N6-carboxylysine modification is found at Lys218. His220 provides a ligand contact to substrate. Ni(2+) contacts are provided by His247 and His273. Catalysis depends on His321, which acts as the Proton donor. Asp361 contributes to the Ni(2+) binding site.

This sequence belongs to the metallo-dependent hydrolases superfamily. Urease alpha subunit family. In terms of assembly, heterohexamer of 3 UreA (alpha) and 3 UreB (beta) subunits. Ni cation is required as a cofactor. Carboxylation allows a single lysine to coordinate two nickel ions.

It is found in the cytoplasm. It catalyses the reaction urea + 2 H2O + H(+) = hydrogencarbonate + 2 NH4(+). The protein operates within nitrogen metabolism; urea degradation; CO(2) and NH(3) from urea (urease route): step 1/1. The polypeptide is Urease subunit beta (Campylobacter lari).